Consider the following 146-residue polypeptide: Wheatwin-1 (146 aa).

The first 21 residues, 1-21 (MAARPMLVVALLCAAAAAATA), serve as a signal peptide directing secretion. Residue Q22 is modified to Pyrrolidone carboxylic acid. Residues 22–146 (QQATNVRATY…VNYQFVDCRD (125 aa)) enclose the Barwin domain. 3 cysteine pairs are disulfide-bonded: C52–C84, C73–C107, and C87–C144.

In terms of assembly, monomer.

With respect to regulation, inhibited by 5'-ADP. Its function is as follows. Shows antifungal activity towards B.cinerea and towards the wheat-specific pathogenic fungi F.culmorum and F.graminearum (groups 1 and 2). Has ribonuclease activity. The protein is Wheatwin-1 (PR4A) of Triticum aestivum (Wheat).